Reading from the N-terminus, the 190-residue chain is Threonylcarbamoyl-AMP synthase (190 aa).

The YrdC-like domain occupies 7 to 190 (TGSIAAVVDL…ALTGELFRQG (184 aa)).

It belongs to the SUA5 family. TsaC subfamily.

It is found in the cytoplasm. The enzyme catalyses L-threonine + hydrogencarbonate + ATP = L-threonylcarbamoyladenylate + diphosphate + H2O. Its function is as follows. Required for the formation of a threonylcarbamoyl group on adenosine at position 37 (t(6)A37) in tRNAs that read codons beginning with adenine. Catalyzes the conversion of L-threonine, HCO(3)(-)/CO(2) and ATP to give threonylcarbamoyl-AMP (TC-AMP) as the acyladenylate intermediate, with the release of diphosphate. The chain is Threonylcarbamoyl-AMP synthase from Salmonella paratyphi A (strain ATCC 9150 / SARB42).